A 353-amino-acid polypeptide reads, in one-letter code: 4-hydroxy-2-oxovalerate aldolase 2 (353 aa).

The Pyruvate carboxyltransferase domain occupies 14–266 (VRMTDTSLRD…KTGIDFFDIA (253 aa)). 22-23 (RD) lines the substrate pocket. D23 is a Mn(2+) binding site. Catalysis depends on H26, which acts as the Proton acceptor. The substrate site is built by S176 and H205. H205 and H207 together coordinate Mn(2+). Y296 serves as a coordination point for substrate.

Belongs to the 4-hydroxy-2-oxovalerate aldolase family.

The catalysed reaction is (S)-4-hydroxy-2-oxopentanoate = acetaldehyde + pyruvate. In Mycobacterium sp. (strain JLS), this protein is 4-hydroxy-2-oxovalerate aldolase 2.